The chain runs to 295 residues: Ribosomal protein L11 methyltransferase (295 aa).

The S-adenosyl-L-methionine site is built by Thr-139, Gly-166, Asp-188, and Asn-231.

Belongs to the methyltransferase superfamily. PrmA family.

The protein resides in the cytoplasm. It catalyses the reaction L-lysyl-[protein] + 3 S-adenosyl-L-methionine = N(6),N(6),N(6)-trimethyl-L-lysyl-[protein] + 3 S-adenosyl-L-homocysteine + 3 H(+). In terms of biological role, methylates ribosomal protein L11. This Cyanothece sp. (strain PCC 7425 / ATCC 29141) protein is Ribosomal protein L11 methyltransferase.